The primary structure comprises 111 residues: Phosphoribosyl-ATP pyrophosphatase (111 aa).

The protein belongs to the PRA-PH family.

The protein localises to the cytoplasm. The enzyme catalyses 1-(5-phospho-beta-D-ribosyl)-ATP + H2O = 1-(5-phospho-beta-D-ribosyl)-5'-AMP + diphosphate + H(+). It functions in the pathway amino-acid biosynthesis; L-histidine biosynthesis; L-histidine from 5-phospho-alpha-D-ribose 1-diphosphate: step 2/9. The chain is Phosphoribosyl-ATP pyrophosphatase from Pseudomonas putida (strain W619).